Consider the following 232-residue polypeptide: Phosphoribosylformylglycinamidine synthase subunit PurQ (232 aa).

Positions 3–232 constitute a Glutamine amidotransferase type-1 domain; it reads FAVIVFPGSN…SLVASALAVV (230 aa). Cys86 (nucleophile) is an active-site residue. Active-site residues include His203 and Glu205.

In terms of assembly, part of the FGAM synthase complex composed of 1 PurL, 1 PurQ and 2 PurS subunits.

The protein resides in the cytoplasm. It catalyses the reaction N(2)-formyl-N(1)-(5-phospho-beta-D-ribosyl)glycinamide + L-glutamine + ATP + H2O = 2-formamido-N(1)-(5-O-phospho-beta-D-ribosyl)acetamidine + L-glutamate + ADP + phosphate + H(+). The catalysed reaction is L-glutamine + H2O = L-glutamate + NH4(+). It functions in the pathway purine metabolism; IMP biosynthesis via de novo pathway; 5-amino-1-(5-phospho-D-ribosyl)imidazole from N(2)-formyl-N(1)-(5-phospho-D-ribosyl)glycinamide: step 1/2. In terms of biological role, part of the phosphoribosylformylglycinamidine synthase complex involved in the purines biosynthetic pathway. Catalyzes the ATP-dependent conversion of formylglycinamide ribonucleotide (FGAR) and glutamine to yield formylglycinamidine ribonucleotide (FGAM) and glutamate. The FGAM synthase complex is composed of three subunits. PurQ produces an ammonia molecule by converting glutamine to glutamate. PurL transfers the ammonia molecule to FGAR to form FGAM in an ATP-dependent manner. PurS interacts with PurQ and PurL and is thought to assist in the transfer of the ammonia molecule from PurQ to PurL. In Gloeobacter violaceus (strain ATCC 29082 / PCC 7421), this protein is Phosphoribosylformylglycinamidine synthase subunit PurQ.